The chain runs to 1034 residues: Potassium-transporting ATPase alpha chain 1 (1034 aa).

The Cytoplasmic segment spans residues 1 to 97; sequence MGKAENYEMY…NALRPPRGTP (97 aa). 2 positions are modified to phosphotyrosine: Tyr-7 and Tyr-10. The tract at residues 14-41 is disordered; that stretch reads LGPGPGGDMAAKMSKKKAGKGGGKKKEK. Residues 26-39 are compositionally biased toward basic residues; that stretch reads MSKKKAGKGGGKKK. Phosphoserine is present on Ser-27. Residues 98–118 form a helical membrane-spanning segment; the sequence is EYVKFARQLAGGLQCLMWVAA. At 119–141 the chain is on the lumenal side; that stretch reads AICLIAFAIQASEGDLTTDDNLY. A helical transmembrane segment spans residues 142–162; the sequence is LALALIAVVVVTGCFGYYQEF. The Cytoplasmic segment spans residues 163 to 298; that stretch reads KSTNIIASFK…NEKTPIAIEI (136 aa). The segment covering 225–239 has biased composition (polar residues); the sequence is NSSLTGESEPQTRSP. A disordered region spans residues 225-245; that stretch reads NSSLTGESEPQTRSPECTHES. A helical membrane pass occupies residues 299-318; sequence EHFVDIIAGLAILFGATFFV. Residues 319 to 330 lie on the Lumenal side of the membrane; it reads VAMCIGYTFLRA. Residues 331-348 traverse the membrane as a helical segment; that stretch reads MVFFMAIVVAYVPEGLLA. Residues Val-339, Ala-340, Val-342, and Glu-344 each coordinate K(+). Residues 349–782 are Cytoplasmic-facing; sequence TVTVCLSLTA…EQGRLIFDNL (434 aa). Asp-386 serves as the catalytic 4-aspartylphosphate intermediate. Asp-386 and Thr-388 together coordinate Mg(2+). Residues Ser-462 and Ser-600 each carry the phosphoserine modification. Residues Asp-727 and Asp-731 each coordinate Mg(2+). The helical transmembrane segment at 783–802 threads the bilayer; sequence KKSIAYTLTKNIPELTPYLI. Glu-796 is a K(+) binding site. Topologically, residues 803 to 812 are lumenal; it reads YITVSVPLPL. A helical membrane pass occupies residues 813 to 833; the sequence is GCITILFIELCTDIFPSVSLA. Residue Glu-821 participates in K(+) binding. Topologically, residues 834 to 853 are cytoplasmic; sequence YEKAESDIMHLRPRNPKRDR. At Ser-839 the chain carries Phosphoserine. The chain crosses the membrane as a helical span at residues 854 to 876; it reads LVNEPLAAYSYFQIGAIQSFAGF. Over 877-928 the chain is Lumenal; it reads TDYFTAMAQEGWFPLLCVGLRPYWENHHLQDLQDSYGQEWTFGQRLYQQYTC. Residues 929-948 form a helical membrane-spanning segment; sequence YTVFFISIEMCQIADVLIRK. The Cytoplasmic portion of the chain corresponds to 949–962; it reads TRRLSAFQQGFFRN. A Phosphoserine; by PKA modification is found at Ser-953. A helical transmembrane segment spans residues 963–981; sequence RILVIAIVFQVCIGCFLCY. Residues 982 to 996 are Lumenal-facing; sequence CPGMPNIFNFMPIRY. A helical transmembrane segment spans residues 997 to 1017; sequence QWWLVPMPFGLLIFVYDEIRK. Over 1018–1034 the chain is Cytoplasmic; sequence LGVRCCPGSWWDQELYY.

It belongs to the cation transport ATPase (P-type) (TC 3.A.3) family. Type IIC subfamily. In terms of assembly, the gastric H(+)/K(+) ATPase pump is composed of the catalytic alpha subunit ATP4A and the regulatory beta subunit ATP4B. Interacts (via the P-domain) with ATP4B (via N-terminus); this interaction stabilizes the lumenal-open E2 conformation state and prevents the reverse reaction of the transport cycle.

It is found in the apical cell membrane. The catalysed reaction is K(+)(out) + ATP + H2O + H(+)(in) = K(+)(in) + ADP + phosphate + 2 H(+)(out). The catalytic subunit of the gastric H(+)/K(+) ATPase pump which transports H(+) ions in exchange for K(+) ions across the apical membrane of parietal cells. Uses ATP as an energy source to pump H(+) ions to the gastric lumen while transporting K(+) ion from the lumen into the cell. Remarkably generates a million-fold proton gradient across the gastric parietal cell membrane, acidifying the gastric juice down to pH 1. Within a transport cycle, the transfer of a H(+) ion across the membrane is coupled to ATP hydrolysis and is associated with a transient phosphorylation that shifts the pump conformation from inward-facing (E1) to outward-facing state (E2). The release of the H(+) ion in the stomach lumen is followed by binding of K(+) ion converting the pump conformation back to the E1 state. The polypeptide is Potassium-transporting ATPase alpha chain 1 (ATP4A) (Canis lupus familiaris (Dog)).